We begin with the raw amino-acid sequence, 174 residues long: Cytochrome c oxidase subunit 5A, mitochondrial (174 aa).

Residues 1-29 (MASLTRAVTRLAIAGRQAVRTIATTTPVS) constitute a mitochondrion transit peptide.

This sequence belongs to the cytochrome c oxidase subunit 5A family. Component of the cytochrome c oxidase (complex IV, CIV), a multisubunit enzyme composed of a catalytic core of 3 subunits and several supernumerary subunits. The complex exists as a monomer or a dimer and forms supercomplexes (SCs) in the inner mitochondrial membrane with ubiquinol-cytochrome c oxidoreductase (cytochrome b-c1 complex, complex III, CIII).

It localises to the mitochondrion inner membrane. It participates in energy metabolism; oxidative phosphorylation. In terms of biological role, component of the cytochrome c oxidase, the last enzyme in the mitochondrial electron transport chain which drives oxidative phosphorylation. The respiratory chain contains 3 multisubunit complexes succinate dehydrogenase (complex II, CII), ubiquinol-cytochrome c oxidoreductase (cytochrome b-c1 complex, complex III, CIII) and cytochrome c oxidase (complex IV, CIV), that cooperate to transfer electrons derived from NADH and succinate to molecular oxygen, creating an electrochemical gradient over the inner membrane that drives transmembrane transport and the ATP synthase. Cytochrome c oxidase is the component of the respiratory chain that catalyzes the reduction of oxygen to water. Electrons originating from reduced cytochrome c in the intermembrane space (IMS) are transferred via the dinuclear copper A center (CU(A)) of subunit 2 and heme A of subunit 1 to the active site in subunit 1, a binuclear center (BNC) formed by heme A3 and copper B (CU(B)). The BNC reduces molecular oxygen to 2 water molecules using 4 electrons from cytochrome c in the IMS and 4 protons from the mitochondrial matrix. This chain is Cytochrome c oxidase subunit 5A, mitochondrial, found in Caenorhabditis elegans.